Reading from the N-terminus, the 250-residue chain is Large ribosomal subunit protein uL30B (250 aa).

This sequence belongs to the universal ribosomal protein uL30 family. As to quaternary structure, component of the large ribosomal subunit (LSU). Mature yeast ribosomes consist of a small (40S) and a large (60S) subunit. The 40S small subunit contains 1 molecule of ribosomal RNA (18S rRNA) and at least 33 different proteins. The large 60S subunit contains 3 rRNA molecules (25S, 5.8S and 5S rRNA) and at least 46 different proteins.

The protein resides in the cytoplasm. Its subcellular location is the nucleus. It localises to the nucleolus. Functionally, component of the ribosome, a large ribonucleoprotein complex responsible for the synthesis of proteins in the cell. The small ribosomal subunit (SSU) binds messenger RNAs (mRNAs) and translates the encoded message by selecting cognate aminoacyl-transfer RNA (tRNA) molecules. The large subunit (LSU) contains the ribosomal catalytic site termed the peptidyl transferase center (PTC), which catalyzes the formation of peptide bonds, thereby polymerizing the amino acids delivered by tRNAs into a polypeptide chain. The nascent polypeptides leave the ribosome through a tunnel in the LSU and interact with protein factors that function in enzymatic processing, targeting, and the membrane insertion of nascent chains at the exit of the ribosomal tunnel. The sequence is that of Large ribosomal subunit protein uL30B (rpl702) from Schizosaccharomyces pombe (strain 972 / ATCC 24843) (Fission yeast).